Consider the following 630-residue polypeptide: L-amino-acid oxidase (630 aa).

The N-terminal stretch at 1 to 21 (MAGLALRLVLAATLLGLAGSL) is a signal peptide. A disulfide bond links Cys-35 and Cys-198. A glycan (N-linked (GlcNAc...) asparagine) is linked at Asn-53. FAD is bound by residues 68 to 69 (VA), 88 to 89 (EA), Arg-96, and 112 to 115 (GAMR). Arg-115 is a substrate binding site. N-linked (GlcNAc...) asparagine glycans are attached at residues Asn-133 and Asn-219. Residue Val-286 coordinates FAD. Tyr-395 contacts substrate. Residues Glu-479 and 486 to 491 (GWVETA) contribute to the FAD site. 486-487 (GW) is a binding site for substrate. The disordered stretch occupies residues 532–554 (GERPEEQQAREEVSPDEQEPSHK).

This sequence belongs to the flavin monoamine oxidase family. FIG1 subfamily. Requires FAD as cofactor. As to expression, primarily found in immune tissues. In terms of tissue distribution, primarily found in immune tissues, mostly in B-lymphocytes. Restricted to the testis, predominantly in Sertoli cells at the periphery of the ducts, and the brain, including Purkinje cells, hippocampus and mitral cells in the olfactory bulb. No isoform 2 expression in fetal tissues.

It is found in the secreted. The protein localises to the cytoplasmic vesicle. The protein resides in the secretory vesicle. Its subcellular location is the acrosome. It localises to the lysosome. It catalyses the reaction an L-alpha-amino acid + O2 + H2O = a 2-oxocarboxylate + H2O2 + NH4(+). It carries out the reaction L-tryptophan + O2 + H2O = indole-3-pyruvate + H2O2 + NH4(+). The enzyme catalyses L-phenylalanine + O2 + H2O = 3-phenylpyruvate + H2O2 + NH4(+). The catalysed reaction is L-tyrosine + O2 + H2O = 3-(4-hydroxyphenyl)pyruvate + H2O2 + NH4(+). It catalyses the reaction L-arginine + O2 + H2O = 5-guanidino-2-oxopentanoate + H2O2 + NH4(+). It participates in amino-acid degradation; L-tryptophan degradation via pyruvate pathway. Secreted L-amino-acid oxidase that acts as a key immunoregulator. Has preference for L-aromatic amino acids: converts phenylalanine (Phe), tyrosine (Tyr) and tryptophan (Trp) to phenylpyruvic acid (PP), hydroxyphenylpyruvic acid (HPP), and indole-3-pyruvic acid (I3P), respectively. Also has weak L-arginine oxidase activity. Acts as a negative regulator of anti-tumor immunity by mediating Trp degradation via an indole pyruvate pathway that activates the transcription factor AHR. IL4I1-mediated Trp catabolism generates I3P, giving rise to indole metabolites (indole-3-acetic acid (IAA) and indole-3-aldehyde (I3A)) and kynurenic acid, which act as ligands for AHR, a ligand-activated transcription factor that plays important roles in immunity and cancer. AHR activation by indoles following IL4I1-mediated Trp degradation enhances tumor progression by promoting cancer cell motility and suppressing adaptive immunity. Also has an immunoregulatory function in some immune cell, probably by mediating Trp degradation and promoting downstream AHR activation: inhibits T-cell activation and proliferation, promotes the differentiation of naive CD4(+) T-cells into FOXP3(+) regulatory T-cells (Treg) and regulates the development and function of B-cells. Also regulates M2 macrophage polarization by inhibiting T-cell activation. Also has antibacterial properties by inhibiting growth of Gram negative and Gram positive bacteria through the production of NH4(+) and H2O2. The protein is L-amino-acid oxidase of Mus musculus (Mouse).